The following is a 1410-amino-acid chain: Condensin-1 complex subunit CAP-D2 (1410 aa).

The span at 469–480 shows a compositional bias: basic and acidic residues; it reads LEPTEHASKEST. Disordered stretches follow at residues 469 to 492, 504 to 525, 860 to 879, and 1208 to 1410; these read LEPT…DGEI, HQDS…EKDV, KTKK…NLEA, and KEQE…GSRS. Polar residues predominate over residues 869-879; sequence ESQNTEENLEA. Positions 1208 to 1226 are enriched in basic and acidic residues; that stretch reads KEQEETARNAEVHREKTKT. 2 stretches are compositionally biased toward acidic residues: residues 1240–1284 and 1306–1319; these read PVEE…EEPD and IETE…DSEP. Over residues 1323–1339 the composition is skewed to polar residues; the sequence is QCGTTNPRSLNRKTSGD. Acidic residues predominate over residues 1342-1365; that stretch reads IETESEEEQSDSEEEPSDSEEEPD. The segment covering 1368–1379 has biased composition (polar residues); the sequence is QCGTTNPRSLNQ.

This sequence belongs to the CND1 (condensin subunit 1) family. Component of the condensin complex. Present in buds.

Its subcellular location is the chromosome. It is found in the nucleus. Functionally, essential protein. Regulatory subunit of the condensin complex, a complex required for conversion of interphase chromatin into mitotic-like condense chromosomes. The condensin complex probably introduces positive supercoils into relaxed DNA in the presence of type I topoisomerases and converts nicked DNA into positive knotted forms in the presence of type II topoisomerases. Required for fertility, growth and euchromatin organization, but not for sister chromatid cohesion. Necessary to maintain normal structural integrity of the meiotic chromosomes during the two nuclear divisions of gametogenesis, especially to maintain compaction of the centromeric repeats and 45S rDNA. Also seems to be involved in crossover formation during meiotic prophase I. Prevents centromeric and pericentromeric heterochromatin repeats association. Contributes to the induction of stress-responsive genes in response to stress treatment. This Arabidopsis thaliana (Mouse-ear cress) protein is Condensin-1 complex subunit CAP-D2.